The sequence spans 484 residues: tRNA sulfurtransferase (484 aa).

Residues 61–165 (ILLVELLGRI…NDKMMLIKAR (105 aa)) form the THUMP domain. ATP is bound by residues 183–184 (LI), lysine 265, glycine 287, and glutamine 296. Cysteines 344 and 456 form a disulfide. Positions 404–484 (LSANDVILDI…DNVKVLNKIS (81 aa)) constitute a Rhodanese domain. Cysteine 456 serves as the catalytic Cysteine persulfide intermediate.

It belongs to the ThiI family.

The protein resides in the cytoplasm. It catalyses the reaction [ThiI sulfur-carrier protein]-S-sulfanyl-L-cysteine + a uridine in tRNA + 2 reduced [2Fe-2S]-[ferredoxin] + ATP + H(+) = [ThiI sulfur-carrier protein]-L-cysteine + a 4-thiouridine in tRNA + 2 oxidized [2Fe-2S]-[ferredoxin] + AMP + diphosphate. The catalysed reaction is [ThiS sulfur-carrier protein]-C-terminal Gly-Gly-AMP + S-sulfanyl-L-cysteinyl-[cysteine desulfurase] + AH2 = [ThiS sulfur-carrier protein]-C-terminal-Gly-aminoethanethioate + L-cysteinyl-[cysteine desulfurase] + A + AMP + 2 H(+). It participates in cofactor biosynthesis; thiamine diphosphate biosynthesis. Its function is as follows. Catalyzes the ATP-dependent transfer of a sulfur to tRNA to produce 4-thiouridine in position 8 of tRNAs, which functions as a near-UV photosensor. Also catalyzes the transfer of sulfur to the sulfur carrier protein ThiS, forming ThiS-thiocarboxylate. This is a step in the synthesis of thiazole, in the thiamine biosynthesis pathway. The sulfur is donated as persulfide by IscS. This Histophilus somni (strain 129Pt) (Haemophilus somnus) protein is tRNA sulfurtransferase.